A 284-amino-acid chain; its full sequence is 2-dehydro-3-deoxyphosphooctonate aldolase (284 aa).

It belongs to the KdsA family.

The protein localises to the cytoplasm. The enzyme catalyses D-arabinose 5-phosphate + phosphoenolpyruvate + H2O = 3-deoxy-alpha-D-manno-2-octulosonate-8-phosphate + phosphate. Its pathway is carbohydrate biosynthesis; 3-deoxy-D-manno-octulosonate biosynthesis; 3-deoxy-D-manno-octulosonate from D-ribulose 5-phosphate: step 2/3. It participates in bacterial outer membrane biogenesis; lipopolysaccharide biosynthesis. The protein is 2-dehydro-3-deoxyphosphooctonate aldolase of Aliivibrio fischeri (strain ATCC 700601 / ES114) (Vibrio fischeri).